The sequence spans 553 residues: Chaperonin GroEL (553 aa).

Residues 29–32 (TLGP), Lys50, 86–90 (DGTTT), Gly424, and Asp504 each bind ATP.

Belongs to the chaperonin (HSP60) family. Forms a cylinder of 14 subunits composed of two heptameric rings stacked back-to-back. Interacts with the co-chaperonin GroES.

It localises to the cytoplasm. It catalyses the reaction ATP + H2O + a folded polypeptide = ADP + phosphate + an unfolded polypeptide.. Its function is as follows. Together with its co-chaperonin GroES, plays an essential role in assisting protein folding. The GroEL-GroES system forms a nano-cage that allows encapsulation of the non-native substrate proteins and provides a physical environment optimized to promote and accelerate protein folding. This Koribacter versatilis (strain Ellin345) protein is Chaperonin GroEL.